The sequence spans 103 residues: MPQAVGVIQTLGFPSVLAAADAMLKGGRVTLVYYDLAERGNFVVAIRGPVSEVNLSMKMGLAAVNESVMGGEIVSHYIVPNPPENVLAVLPVEYTEKVARFRT.

The region spanning 4–91 (AVGVIQTLGF…PPENVLAVLP (88 aa)) is the BMC domain.

The protein belongs to the bacterial microcompartments protein family. CcmK subfamily. Forms mixed heterohexamers with CcmK4, probably with 1:5 CcmK3:CcmK4 stoichiometry. Only very weak interactions with CcmK1 and CcmK2 were seen. Bulky residues in the pore region probably preclude the formation of homohexamers by this subunit.

The protein resides in the carboxysome. In terms of biological role, a probably minor shell protein component of the carboxysome, a polyhedral inclusion where RuBisCO (ribulose bisphosphate carboxylase, rbcL-rbcS) is sequestered. This subunit probably does not form homohexamers. This is Carboxysome shell protein CcmK3 from Synechocystis sp. (strain ATCC 27184 / PCC 6803 / Kazusa).